A 280-amino-acid polypeptide reads, in one-letter code: Diaminopimelate epimerase (280 aa).

Asn13 and Asn67 together coordinate substrate. Residue Cys76 is the Proton donor of the active site. Substrate-binding positions include 77–78 (GN), Asn191, and 208–209 (ER). Catalysis depends on Cys218, which acts as the Proton acceptor. 219-220 (GT) provides a ligand contact to substrate.

This sequence belongs to the diaminopimelate epimerase family. Homodimer.

It is found in the cytoplasm. It carries out the reaction (2S,6S)-2,6-diaminopimelate = meso-2,6-diaminopimelate. It functions in the pathway amino-acid biosynthesis; L-lysine biosynthesis via DAP pathway; DL-2,6-diaminopimelate from LL-2,6-diaminopimelate: step 1/1. In terms of biological role, catalyzes the stereoinversion of LL-2,6-diaminopimelate (L,L-DAP) to meso-diaminopimelate (meso-DAP), a precursor of L-lysine. This is Diaminopimelate epimerase from Archaeoglobus fulgidus (strain ATCC 49558 / DSM 4304 / JCM 9628 / NBRC 100126 / VC-16).